We begin with the raw amino-acid sequence, 152 residues long: Transcriptional regulator MraZ (152 aa).

2 SpoVT-AbrB domains span residues 5–52 (ATLV…PLPE) and 81–124 (ASEC…DETT).

Belongs to the MraZ family. In terms of assembly, forms oligomers.

Its subcellular location is the cytoplasm. The protein localises to the nucleoid. Its function is as follows. Negatively regulates its own expression and that of the subsequent genes in the proximal part of the division and cell wall (dcw) gene cluster. Acts by binding directly to DNA. May also regulate the expression of genes outside the dcw cluster. The sequence is that of Transcriptional regulator MraZ from Salmonella paratyphi A (strain ATCC 9150 / SARB42).